Consider the following 874-residue polypeptide: Alanine--tRNA ligase (874 aa).

Residues H564, H568, C665, and H669 each contribute to the Zn(2+) site.

This sequence belongs to the class-II aminoacyl-tRNA synthetase family. The cofactor is Zn(2+).

It is found in the cytoplasm. The enzyme catalyses tRNA(Ala) + L-alanine + ATP = L-alanyl-tRNA(Ala) + AMP + diphosphate. Catalyzes the attachment of alanine to tRNA(Ala) in a two-step reaction: alanine is first activated by ATP to form Ala-AMP and then transferred to the acceptor end of tRNA(Ala). Also edits incorrectly charged Ser-tRNA(Ala) and Gly-tRNA(Ala) via its editing domain. This is Alanine--tRNA ligase from Cupriavidus metallidurans (strain ATCC 43123 / DSM 2839 / NBRC 102507 / CH34) (Ralstonia metallidurans).